The chain runs to 60 residues: MICHNQQSSQPPTIKTCSEGQCYKKTWRDHRGTISERGCGCPTVKPGIHISCCASDKCNA.

4 disulfides stabilise this stretch: Cys-3-Cys-22, Cys-17-Cys-39, Cys-41-Cys-52, and Cys-53-Cys-58.

The protein belongs to the three-finger toxin family. Short-chain subfamily. Type I alpha-neurotoxin sub-subfamily. As to expression, expressed by the venom gland.

The protein resides in the secreted. Functionally, binds to muscle nicotinic acetylcholine receptor (nAChR) and inhibit acetylcholine from binding to the receptor, thereby impairing neuromuscular transmission. The chain is Three-finger toxin Mnn I from Micrurus nigrocinctus (Central American coral snake).